We begin with the raw amino-acid sequence, 79 residues long: CDC42 small effector protein 1 (79 aa).

S-palmitoyl cysteine attachment occurs at residues C10 and C11. The 14-residue stretch at 30 to 43 (IGEPMNFVHLTHIG) folds into the CRIB domain. The disordered stretch occupies residues 48–79 (GAGDGLAMTGAVQEQMRSKGNRDRPWSNSRGL). The segment covering 63–72 (MRSKGNRDRP) has biased composition (basic and acidic residues).

This sequence belongs to the CDC42SE/SPEC family. Interacts with CDC42 (in GTP-bound form). Interacts weakly with RAC1 and not at all with RHOA.

The protein resides in the cytoplasm. The protein localises to the cytoskeleton. It is found in the cell membrane. Probably involved in the organization of the actin cytoskeleton by acting downstream of CDC42, inducing actin filament assembly. Alters CDC42-induced cell shape changes. In activated T-cells, may play a role in CDC42-mediated F-actin accumulation at the immunological synapse. May play a role in early contractile events in phagocytosis in macrophages. The sequence is that of CDC42 small effector protein 1 (CDC42SE1) from Bos taurus (Bovine).